Reading from the N-terminus, the 209-residue chain is Large ribosomal subunit protein uL3 (209 aa).

The tract at residues 128-166 (FGGGSRTHGQSDRLRAPGSVGGSSDPSRTFKGTRMAGRM) is disordered.

It belongs to the universal ribosomal protein uL3 family. As to quaternary structure, part of the 50S ribosomal subunit. Forms a cluster with proteins L14 and L19.

Its function is as follows. One of the primary rRNA binding proteins, it binds directly near the 3'-end of the 23S rRNA, where it nucleates assembly of the 50S subunit. The protein is Large ribosomal subunit protein uL3 of Chlorobaculum parvum (strain DSM 263 / NCIMB 8327) (Chlorobium vibrioforme subsp. thiosulfatophilum).